Here is a 67-residue protein sequence, read N- to C-terminus: Conotoxin VnMMSK-03 (67 aa).

The N-terminal stretch at 1–20 (MMSKLGVVLTICLLPFPLTA) is a signal peptide. Residues 21 to 50 (LPMDGDQPADLPALRTQDFEPERSPWFDPV) constitute a propeptide that is removed on maturation. 3 disulfide bridges follow: C53–C65, C54–C61, and C58–C64. P63 bears the 4-hydroxyproline mark.

This sequence belongs to the conotoxin M superfamily. Expressed by the venom duct.

It localises to the secreted. This chain is Conotoxin VnMMSK-03, found in Conus ventricosus (Mediterranean cone).